The chain runs to 401 residues: Steroid C26-monooxygenase (401 aa).

Heme is bound at residue Cys343.

The protein belongs to the cytochrome P450 family. It depends on heme as a cofactor.

It carries out the reaction cholest-4-en-3-one + 6 reduced [2Fe-2S]-[ferredoxin] + 3 O2 + 5 H(+) = (25R)-3-oxocholest-4-en-26-oate + 6 oxidized [2Fe-2S]-[ferredoxin] + 4 H2O. Its pathway is steroid metabolism; cholesterol degradation. Functionally, involved in the utilization of cholesterol as the sole carbon and energy source by degrading the side chain. Primarily catalyzes the sequential oxidation of the terminal methyl of cholest-4-en-3-one into (25R)-26-hydroxycholest-4-en-3-one (alcohol), (25R)-26-oxocholest-4-en-3-one (aldehyde), to finally yield the carboxylic acid (25R)-3-oxocholest-4-en-26-oate. Also able to sequentially oxidize cholesterol itself, not only cholest-4-en-3-one. In Mycolicibacterium smegmatis (strain ATCC 700084 / mc(2)155) (Mycobacterium smegmatis), this protein is Steroid C26-monooxygenase.